Reading from the N-terminus, the 953-residue chain is ALS2 C-terminal-like protein (953 aa).

8 MORN repeats span residues 358-380 (YEGEWYWGRPHGKGTLKWPDGRN), 381-403 (HVGDFCQGLEHGFGIRLVPQASE), 409-431 (YKCHWWEGSMCGYGICEYSTSEV), 432-454 (YKGYFQEGLRHGFGVLESAPQAP), 459-481 (YTGHWERGQRSGYGVEEDSDRGE), 483-505 (YIGMWQADQRHGPGVMVTQAGVC), 506-528 (YQGTFQADKMVGPGILLSDDDSL), and 529-552 (YEGTFTRDLTLVGKGKVTFPNGFT). Residues 796 to 942 (LFPDARLLEF…IQKEDMRLHR (147 aa)) form the VPS9 domain.

Homodimer. Forms a heteromeric complex with ALS2. Interacts with ALS2 and RAB5A.

It is found in the cytoplasm. In terms of biological role, acts as a guanine nucleotide exchange factor (GEF) for Rab5 GTPase. Regulates the ALS2-mediated endosome dynamics. This Bos taurus (Bovine) protein is ALS2 C-terminal-like protein (ALS2CL).